Reading from the N-terminus, the 177-residue chain is Basic form of pathogenesis-related protein 1 (177 aa).

An N-terminal signal peptide occupies residues 1 to 23 (MGFLTTIVACFITFAILIHSSKA). Gln-24 carries the post-translational modification Pyrrolidone carboxylic acid. Positions 31-147 (LNPHNAARRQ…NGWFFITCNY (117 aa)) constitute an SCP domain.

This sequence belongs to the CRISP family. Post-translationally, two disulfide bonds are present.

Functionally, probably involved in the defense reaction of plants against pathogens. This chain is Basic form of pathogenesis-related protein 1, found in Nicotiana tabacum (Common tobacco).